The primary structure comprises 253 residues: Phosphate import ATP-binding protein PstB (253 aa).

Residues 7 to 248 (IDARDVNFWY…PEKEATQNYI (242 aa)) form the ABC transporter domain. 39 to 46 (GPSGCGKS) contacts ATP.

It belongs to the ABC transporter superfamily. Phosphate importer (TC 3.A.1.7) family. The complex is composed of two ATP-binding proteins (PstB), two transmembrane proteins (PstC and PstA) and a solute-binding protein (PstS).

It localises to the cell inner membrane. It catalyses the reaction phosphate(out) + ATP + H2O = ADP + 2 phosphate(in) + H(+). Its function is as follows. Part of the ABC transporter complex PstSACB involved in phosphate import. Responsible for energy coupling to the transport system. The sequence is that of Phosphate import ATP-binding protein PstB from Bacteroides fragilis (strain ATCC 25285 / DSM 2151 / CCUG 4856 / JCM 11019 / LMG 10263 / NCTC 9343 / Onslow / VPI 2553 / EN-2).